The sequence spans 301 residues: Probable DNA-directed RNA polymerase III subunit rpc6 (301 aa).

This sequence belongs to the eukaryotic RPC34/RPC39 RNA polymerase subunit family. Component of the RNA polymerase III (Pol III) complex consisting of 17 subunits. Interacts with TFIIB.

The protein resides in the nucleus. Its function is as follows. DNA-dependent RNA polymerase catalyzes the transcription of DNA into RNA using the four ribonucleoside triphosphates as substrates. Specific peripheric component of RNA polymerase III which synthesizes small RNAs, such as 5S rRNA and tRNAs. The sequence is that of Probable DNA-directed RNA polymerase III subunit rpc6 (rpc6) from Schizosaccharomyces pombe (strain 972 / ATCC 24843) (Fission yeast).